Reading from the N-terminus, the 419-residue chain is Mitogen-activated protein kinase spm1 (419 aa).

In terms of domain architecture, Protein kinase spans 23-314 (YTVTKELGQG…VEEALEHPYL (292 aa)). Residues 29-37 (LGQGAYGIV) and lysine 52 contribute to the ATP site. Residue aspartate 149 is the Proton acceptor of the active site.

This sequence belongs to the protein kinase superfamily. Ser/Thr protein kinase family. MAP kinase subfamily. Mg(2+) serves as cofactor. Post-translationally, phosphorylated by the MAP kinase kinase mkk1.

The catalysed reaction is L-seryl-[protein] + ATP = O-phospho-L-seryl-[protein] + ADP + H(+). The enzyme catalyses L-threonyl-[protein] + ATP = O-phospho-L-threonyl-[protein] + ADP + H(+). In terms of biological role, mitogen-activated protein kinase, part of the mkh1-mkk1-spm1 MAPK cascade that regulates vegetative growth, conidial formation, colony surface hydrophobicity, osmotic stress, cell wall integrity maintenance, carbon and nitrogen source utilization, chitin distribution, septa formation, and pathogenicity. The protein is Mitogen-activated protein kinase spm1 of Cytospora mali (Apple Valsa canker fungus).